The chain runs to 294 residues: Acetylglutamate kinase (294 aa).

Residues 66–67 (GG), Arg-88, and Asn-193 each bind substrate.

The protein belongs to the acetylglutamate kinase family. ArgB subfamily.

It localises to the cytoplasm. The enzyme catalyses N-acetyl-L-glutamate + ATP = N-acetyl-L-glutamyl 5-phosphate + ADP. The protein operates within amino-acid biosynthesis; L-arginine biosynthesis; N(2)-acetyl-L-ornithine from L-glutamate: step 2/4. Functionally, catalyzes the ATP-dependent phosphorylation of N-acetyl-L-glutamate. In Agrobacterium fabrum (strain C58 / ATCC 33970) (Agrobacterium tumefaciens (strain C58)), this protein is Acetylglutamate kinase.